A 2282-amino-acid polypeptide reads, in one-letter code: Protein Ycf2 (2282 aa).

ATP is bound at residue 1635–1642; sequence GSIGTGRS.

This sequence belongs to the Ycf2 family.

It is found in the plastid. The protein resides in the chloroplast stroma. Functionally, probable ATPase of unknown function. Its presence in a non-photosynthetic plant (Epifagus virginiana) and experiments in tobacco indicate that it has an essential function which is probably not related to photosynthesis. The polypeptide is Protein Ycf2 (Populus alba (White poplar)).